Consider the following 338-residue polypeptide: 1-aminocyclopropane-1-carboxylate deaminase (338 aa).

Lys51 carries the N6-(pyridoxal phosphate)lysine modification. Ser78 functions as the Nucleophile in the catalytic mechanism.

Belongs to the ACC deaminase/D-cysteine desulfhydrase family. As to quaternary structure, homotrimer. Pyridoxal 5'-phosphate serves as cofactor.

It carries out the reaction 1-aminocyclopropane-1-carboxylate + H2O = 2-oxobutanoate + NH4(+). In terms of biological role, catalyzes a cyclopropane ring-opening reaction, the irreversible conversion of 1-aminocyclopropane-1-carboxylate (ACC) to ammonia and alpha-ketobutyrate. Allows growth on ACC as a nitrogen source. The sequence is that of 1-aminocyclopropane-1-carboxylate deaminase from Variovorax paradoxus (strain S110).